A 258-amino-acid polypeptide reads, in one-letter code: Protein SAWADEE HOMEODOMAIN HOMOLOG 1 (258 aa).

The segment at Ala138–Glu244 is SAWADEE domain. Residues Cys191, His225, Cys230, and Cys232 each contribute to the Zn(2+) site.

Associates with the RNA polymerase IV (Pol IV) complex. Interacts with NRPD1, NRPD2, NRPD3, NRPD3B, CLSY1 and CLSY2.

It is found in the nucleus. Involved in RNA-directed DNA methylation (RdDM). Required for the silencing of some endogenous RdDM targets and accumulation of 24-nt siRNAs, but not for the production of Pol V-dependent transcripts. Functions in transcriptional silencing through both DNA methylation-dependent and -independent pathways. Required for both maintenance and de-novo DNA methylation. Plays a role in the recruitment of Pol IV to genomic regions associated with K9 methylated histone H3 that are targets for RdDM. This Arabidopsis thaliana (Mouse-ear cress) protein is Protein SAWADEE HOMEODOMAIN HOMOLOG 1 (SHH1).